The following is a 107-amino-acid chain: CLAVATA3/ESR (CLE)-related protein 13 (107 aa).

The first 25 residues, 1–25, serve as a signal peptide directing secretion; sequence MATTRVSHVLGFLLWISLLIFVSIG. N-linked (GlcNAc...) asparagine glycosylation occurs at Asn29. The interval 79 to 107 is disordered; sequence ALPAGGSEIDPRYGVEKRLVPSGPNPLHH. Positions 87–97 are enriched in basic and acidic residues; that stretch reads IDPRYGVEKRL. A hydroxyproline mark is found at Pro99 and Pro102. Pro102 carries an O-linked (Ara...) hydroxyproline glycan.

This sequence belongs to the CLV3/ESR signal peptide family. The O-glycosylation (arabinosylation) of the hydroxyproline Pro-102 enhances binding affinity of the CLE13p peptide for its receptor. In terms of tissue distribution, mostly expressed in seedlings, roots, flowers, stems and apex, and, to a lower extent, in leaves and siliques.

The protein resides in the secreted. The protein localises to the extracellular space. In terms of biological role, extracellular signal peptide that regulates cell fate. Represses root apical meristem maintenance. Regulates the transition of protophloem cells from proliferation to differentiation, thus impinging on postembryonic growth capacity of the root meristem; this signaling pathway requires CRN and CLV2. The polypeptide is CLAVATA3/ESR (CLE)-related protein 13 (Arabidopsis thaliana (Mouse-ear cress)).